The following is a 419-amino-acid chain: Serine/threonine-protein kinase Kist (419 aa).

Positions 23–303 constitute a Protein kinase domain; sequence WQVQSRLGSG…PAEMALCSPF (281 aa). Residues 29–37 and lysine 54 contribute to the ATP site; that span reads LGSGSSASV. The Proton acceptor role is filled by aspartate 158. Residues 323 to 405 enclose the RRM domain; it reads LRLLNVLDDD…GKFVVATFYP (83 aa).

It belongs to the protein kinase superfamily. Ser/Thr protein kinase family. As to quaternary structure, interacts with PAM and CDKN1B/p27Kip1. Interacts with stathmin.

Its subcellular location is the nucleus. It catalyses the reaction L-seryl-[protein] + ATP = O-phospho-L-seryl-[protein] + ADP + H(+). The catalysed reaction is L-threonyl-[protein] + ATP = O-phospho-L-threonyl-[protein] + ADP + H(+). Its function is as follows. Upon serum stimulation, phosphorylates CDKN1B/p27Kip1, thus controlling CDKN1B subcellular location and cell cycle progression in G1 phase. May be involved in trafficking and/or processing of RNA. The chain is Serine/threonine-protein kinase Kist (Uhmk1) from Mus musculus (Mouse).